The primary structure comprises 436 residues: Serine--tRNA ligase (436 aa).

Residue Thr241 to Glu243 participates in L-serine binding. Arg272–Glu274 contributes to the ATP binding site. Position 295 (Glu295) interacts with L-serine. Residue Glu359–Ser362 coordinates ATP. Ser395 is a binding site for L-serine.

The protein belongs to the class-II aminoacyl-tRNA synthetase family. Type-1 seryl-tRNA synthetase subfamily. Homodimer. The tRNA molecule binds across the dimer.

It localises to the cytoplasm. The catalysed reaction is tRNA(Ser) + L-serine + ATP = L-seryl-tRNA(Ser) + AMP + diphosphate + H(+). It catalyses the reaction tRNA(Sec) + L-serine + ATP = L-seryl-tRNA(Sec) + AMP + diphosphate + H(+). It functions in the pathway aminoacyl-tRNA biosynthesis; selenocysteinyl-tRNA(Sec) biosynthesis; L-seryl-tRNA(Sec) from L-serine and tRNA(Sec): step 1/1. In terms of biological role, catalyzes the attachment of serine to tRNA(Ser). Is also able to aminoacylate tRNA(Sec) with serine, to form the misacylated tRNA L-seryl-tRNA(Sec), which will be further converted into selenocysteinyl-tRNA(Sec). This Beijerinckia indica subsp. indica (strain ATCC 9039 / DSM 1715 / NCIMB 8712) protein is Serine--tRNA ligase.